The sequence spans 384 residues: Probable fructokinase-6, chloroplastic (384 aa).

A chloroplast-targeting transit peptide spans 1 to 46 (MALQATTTTFCFSGPTFRSTPHSLTSKRPISIKATTSSPSRLSNSR). The interval 34–61 (ATTSSPSRLSNSRSNLKGRALSSDGSTQ) is disordered. The span at 35–48 (TTSSPSRLSNSRSN) shows a compositional bias: low complexity.

Belongs to the carbohydrate kinase PfkB family.

Its subcellular location is the plastid. The protein resides in the chloroplast. It catalyses the reaction D-fructose + ATP = D-fructose 6-phosphate + ADP + H(+). Its pathway is glycan biosynthesis; starch biosynthesis. In terms of biological role, may play an important role in maintaining the flux of carbon towards starch formation. The protein is Probable fructokinase-6, chloroplastic of Arabidopsis thaliana (Mouse-ear cress).